Here is a 366-residue protein sequence, read N- to C-terminus: Septin-1 (366 aa).

Residues 22-295 (KGFDFTLMVA…EGYRARCLQS (274 aa)) enclose the Septin-type G domain. Positions 32–39 (GESGLGKS) are G1 motif. Residues 32 to 39 (GESGLGKS), Thr66, Gly92, and 171 to 179 (KADALLPRE) contribute to the GTP site. The tract at residues 89–92 (DTPG) is G3 motif. The segment at 170-173 (GKAD) is G4 motif. Ser206 is subject to Phosphoserine. GTP-binding residues include Gly229 and Arg244. Ser247 is subject to Phosphoserine; by AURKB. Thr250 carries the post-translational modification Phosphothreonine. Ser306 and Ser314 each carry phosphoserine; by AURKB. Residues 347 to 366 (EKMQAQMQQSQAQGEQSDVL) are disordered. The span at 349–366 (MQAQMQQSQAQGEQSDVL) shows a compositional bias: low complexity.

This sequence belongs to the TRAFAC class TrmE-Era-EngA-EngB-Septin-like GTPase superfamily. Septin GTPase family. Septins polymerize into heterooligomeric protein complexes that form filaments, and can associate with cellular membranes, actin filaments and microtubules. GTPase activity is required for filament formation. Interacts with AURKB.

It localises to the cytoplasm. The protein resides in the cytoskeleton. The protein localises to the microtubule organizing center. It is found in the centrosome. Its subcellular location is the midbody. Functionally, filament-forming cytoskeletal GTPase. May play a role in cytokinesis (Potential). The protein is Septin-1 of Rattus norvegicus (Rat).